The chain runs to 187 residues: MKIMGILGIQGDIEEHEDAVRKINCIPKRIRTVDDLEGIDALIIPGGESTTIGKLMVSYGFIDKIRNLKIPILGTCAGMVLLSKGTGKEQPLLDILNVTIKRNAYGSQKDSFEKEIVLGGKEIHAVFIRAPQVGDILSKDVEIISKDDENIVGVKQGNIMAISFHPELSDDGVIAYEYFLKNFVEKN.

47 to 49 is a binding site for L-glutamine; sequence GES. The active-site Nucleophile is the cysteine 76. L-glutamine contacts are provided by residues arginine 102 and 128–129; that span reads IR. Active-site charge relay system residues include histidine 165 and glutamate 167.

Belongs to the glutaminase PdxT/SNO family. As to quaternary structure, in the presence of PdxS, forms a dodecamer of heterodimers. Only shows activity in the heterodimer.

It carries out the reaction aldehydo-D-ribose 5-phosphate + D-glyceraldehyde 3-phosphate + L-glutamine = pyridoxal 5'-phosphate + L-glutamate + phosphate + 3 H2O + H(+). It catalyses the reaction L-glutamine + H2O = L-glutamate + NH4(+). Its pathway is cofactor biosynthesis; pyridoxal 5'-phosphate biosynthesis. Functionally, catalyzes the hydrolysis of glutamine to glutamate and ammonia as part of the biosynthesis of pyridoxal 5'-phosphate. The resulting ammonia molecule is channeled to the active site of PdxS. This chain is Pyridoxal 5'-phosphate synthase subunit PdxT, found in Methanococcus maripaludis (strain C5 / ATCC BAA-1333).